Reading from the N-terminus, the 188-residue chain is Elongation factor P 1 (188 aa).

It belongs to the elongation factor P family.

The protein localises to the cytoplasm. The protein operates within protein biosynthesis; polypeptide chain elongation. Functionally, involved in peptide bond synthesis. Stimulates efficient translation and peptide-bond synthesis on native or reconstituted 70S ribosomes in vitro. Probably functions indirectly by altering the affinity of the ribosome for aminoacyl-tRNA, thus increasing their reactivity as acceptors for peptidyl transferase. The chain is Elongation factor P 1 (efp1) from Porphyromonas gingivalis (strain ATCC BAA-308 / W83).